A 319-amino-acid polypeptide reads, in one-letter code: MKTIAVLTSGGDAPGMNAAIRAVVRTAIEKGINVKGIQRGYSGLINGEIFDMNRHSVSDIIQRGGTILRTARCPEFLKEEVRQKAANVLRVFGIDGLVVIGGNGSFMGAQKLSKLGVKTVGLPGTIDNDLPYTDYTIGFDTTLNTVLDAINKLRDTSTSHERVSIIEVMGRDCGDIALFSGIAGGAESVIIPEIGYDFNELCKNILEGKLRGKMHNLIILAEGVGGAAELAKKVEEVTGIETRSTILGHIQRGGSPSAFDRMLASRMGVKAVEVLMEGKTSRVIGIKEGKIMDQDIDEALAVPRSFNKELYDIANMLSK.

ATP is bound at residue G11. An ADP-binding site is contributed by 21–25; sequence RAVVR. ATP contacts are provided by residues 72–73 and 102–105; these read RC and GNGS. N103 contributes to the Mg(2+) binding site. 125–127 provides a ligand contact to substrate; sequence TID. The active-site Proton acceptor is D127. R154 contacts ADP. Residues R162 and 169–171 each bind substrate; that span reads MGR. ADP is bound by residues 185-187, R211, and 213-215; these read GAE and KMH. Residues E222, R243, and 249–252 each bind substrate; that span reads HIQR.

It belongs to the phosphofructokinase type A (PFKA) family. ATP-dependent PFK group I subfamily. Prokaryotic clade 'B1' sub-subfamily. In terms of assembly, homotetramer. Mg(2+) is required as a cofactor.

Its subcellular location is the cytoplasm. It carries out the reaction beta-D-fructose 6-phosphate + ATP = beta-D-fructose 1,6-bisphosphate + ADP + H(+). Its pathway is carbohydrate degradation; glycolysis; D-glyceraldehyde 3-phosphate and glycerone phosphate from D-glucose: step 3/4. Allosterically activated by ADP and other diphosphonucleosides, and allosterically inhibited by phosphoenolpyruvate. Functionally, catalyzes the phosphorylation of D-fructose 6-phosphate to fructose 1,6-bisphosphate by ATP, the first committing step of glycolysis. This Clostridium acetobutylicum (strain ATCC 824 / DSM 792 / JCM 1419 / IAM 19013 / LMG 5710 / NBRC 13948 / NRRL B-527 / VKM B-1787 / 2291 / W) protein is ATP-dependent 6-phosphofructokinase.